Consider the following 218-residue polypeptide: Phosphatidylserine decarboxylase proenzyme (218 aa).

Ser-187 (schiff-base intermediate with substrate; via pyruvic acid) is an active-site residue. Ser-187 is modified (pyruvic acid (Ser); by autocatalysis).

The protein belongs to the phosphatidylserine decarboxylase family. PSD-A subfamily. In terms of assembly, heterodimer of a large membrane-associated beta subunit and a small pyruvoyl-containing alpha subunit. It depends on pyruvate as a cofactor. Is synthesized initially as an inactive proenzyme. Formation of the active enzyme involves a self-maturation process in which the active site pyruvoyl group is generated from an internal serine residue via an autocatalytic post-translational modification. Two non-identical subunits are generated from the proenzyme in this reaction, and the pyruvate is formed at the N-terminus of the alpha chain, which is derived from the carboxyl end of the proenzyme. The post-translation cleavage follows an unusual pathway, termed non-hydrolytic serinolysis, in which the side chain hydroxyl group of the serine supplies its oxygen atom to form the C-terminus of the beta chain, while the remainder of the serine residue undergoes an oxidative deamination to produce ammonia and the pyruvoyl prosthetic group on the alpha chain.

The protein localises to the cell membrane. The catalysed reaction is a 1,2-diacyl-sn-glycero-3-phospho-L-serine + H(+) = a 1,2-diacyl-sn-glycero-3-phosphoethanolamine + CO2. It functions in the pathway phospholipid metabolism; phosphatidylethanolamine biosynthesis; phosphatidylethanolamine from CDP-diacylglycerol: step 2/2. Functionally, catalyzes the formation of phosphatidylethanolamine (PtdEtn) from phosphatidylserine (PtdSer). This Geobacter metallireducens (strain ATCC 53774 / DSM 7210 / GS-15) protein is Phosphatidylserine decarboxylase proenzyme.